Here is a 178-residue protein sequence, read N- to C-terminus: Photosystem I assembly protein Ycf4 (178 aa).

2 helical membrane passes run 19–39 (ILVAAMVTIGGVGFLFASLSS) and 61–81 (LVMGLYSIAAALLATYLWAVI).

This sequence belongs to the Ycf4 family.

The protein localises to the cellular thylakoid membrane. Seems to be required for the assembly of the photosystem I complex. The sequence is that of Photosystem I assembly protein Ycf4 from Synechococcus sp. (strain WH7803).